We begin with the raw amino-acid sequence, 506 residues long: BTB/POZ domain-containing protein At3g22104 (506 aa).

Positions 6-76 (SDLEVDINGE…CYNDGRVAVM (71 aa)) constitute a BTB domain. Residues 187–435 (TWWFDEVLVL…LDEQQQQQQQ (249 aa)) form the NPH3 domain. Positions 421-492 (QAIETLDEQQ…MEVIKKRSKS (72 aa)) form a coiled coil. The tract at residues 485–506 (VIKKRSKSSSKGSNRSLPKLCS) is disordered.

The protein belongs to the NPH3 family.

The protein operates within protein modification; protein ubiquitination. May act as a substrate-specific adapter of an E3 ubiquitin-protein ligase complex (CUL3-RBX1-BTB) which mediates the ubiquitination and subsequent proteasomal degradation of target proteins. In Arabidopsis thaliana (Mouse-ear cress), this protein is BTB/POZ domain-containing protein At3g22104.